We begin with the raw amino-acid sequence, 150 residues long: Large ribosomal subunit protein uL15 (150 aa).

The segment covering 1–15 (MNLSNLQPAEGSTHN) has biased composition (polar residues). The segment at 1–53 (MNLSNLQPAEGSTHNQNKRVGRGEGSGKGGTAARGHKGAKSRSGYSKKIGFEG) is disordered. Over residues 23 to 32 (GEGSGKGGTA) the composition is skewed to gly residues.

It belongs to the universal ribosomal protein uL15 family. As to quaternary structure, part of the 50S ribosomal subunit.

In terms of biological role, binds to the 23S rRNA. This is Large ribosomal subunit protein uL15 from Flavobacterium johnsoniae (strain ATCC 17061 / DSM 2064 / JCM 8514 / BCRC 14874 / CCUG 350202 / NBRC 14942 / NCIMB 11054 / UW101) (Cytophaga johnsonae).